The following is a 354-amino-acid chain: MQFIDHAEIEVIAGKGGDGIVAFRREKYVPAGGPAGGNGGWGGSVIFRAEENLQTLLDFRYARTFKAQDGERGGPNNCTGASGEDLIVDVPCGTVIYDRETDEEIGDLVFHGQIFCVAKGGKGGLGNKHFLSNKNRAPEYALPGLEGEIKQLRLELKLLAEVGIIGLPNAGKSTLISALSAARPKIGAYPFTTLIPNLGVVKRPTGDGTVFADIPGLIEGAHQGVGLGHEFLRHIERTKVLVHLVDLNAEDPIKNYETIQGELEAYGRGLPELPQIIALNKLDAGDHEFADFITEELRRLTDAKILTISAVSRTGLEQLLQEIWDVLDYLKEISRNEAPETSVMDLESLHIADE.

An Obg domain is found at 1-159 (MQFIDHAEIE…KQLRLELKLL (159 aa)). The OBG-type G domain maps to 160 to 328 (AEVGIIGLPN…LLQEIWDVLD (169 aa)). Residues 166-173 (GLPNAGKS), 191-195 (FTTLI), 213-216 (DIPG), 280-283 (NKLD), and 309-311 (SAV) each bind GTP. Mg(2+)-binding residues include serine 173 and threonine 193.

This sequence belongs to the TRAFAC class OBG-HflX-like GTPase superfamily. OBG GTPase family. Monomer. Requires Mg(2+) as cofactor.

It is found in the cytoplasm. Its function is as follows. An essential GTPase which binds GTP, GDP and possibly (p)ppGpp with moderate affinity, with high nucleotide exchange rates and a fairly low GTP hydrolysis rate. Plays a role in control of the cell cycle, stress response, ribosome biogenesis and in those bacteria that undergo differentiation, in morphogenesis control. The protein is GTPase Obg of Picosynechococcus sp. (strain ATCC 27264 / PCC 7002 / PR-6) (Agmenellum quadruplicatum).